Here is a 52-residue protein sequence, read N- to C-terminus: GIFSSRKCKTPSKTFKGICTRDSNCDTSCRYEGYPAGDCKGIRRRCMCSKPC.

4 disulfides stabilise this stretch: Cys-8–Cys-52, Cys-19–Cys-39, Cys-25–Cys-46, and Cys-29–Cys-48.

Distributed in the epidermal cell layer of leaves and in the subepidermal layer region of stems. Not in roots.

The protein resides in the secreted. Its subcellular location is the cell wall. Its function is as follows. Antimicrobial peptide. Active against Fusarium spp., Gram-positive and Gram-negative bacterial pathogens. The protein is Defensin D2 of Spinacia oleracea (Spinach).